We begin with the raw amino-acid sequence, 234 residues long: Phosphoribosylaminoimidazole-succinocarboxamide synthase (234 aa).

Belongs to the SAICAR synthetase family.

The enzyme catalyses 5-amino-1-(5-phospho-D-ribosyl)imidazole-4-carboxylate + L-aspartate + ATP = (2S)-2-[5-amino-1-(5-phospho-beta-D-ribosyl)imidazole-4-carboxamido]succinate + ADP + phosphate + 2 H(+). The protein operates within purine metabolism; IMP biosynthesis via de novo pathway; 5-amino-1-(5-phospho-D-ribosyl)imidazole-4-carboxamide from 5-amino-1-(5-phospho-D-ribosyl)imidazole-4-carboxylate: step 1/2. This Sulfurisphaera tokodaii (strain DSM 16993 / JCM 10545 / NBRC 100140 / 7) (Sulfolobus tokodaii) protein is Phosphoribosylaminoimidazole-succinocarboxamide synthase.